Consider the following 227-residue polypeptide: Orotidine 5'-phosphate decarboxylase (227 aa).

Substrate contacts are provided by residues aspartate 8, lysine 30, aspartate 58–threonine 67, threonine 117, arginine 177, glutamine 186, glycine 206, and arginine 207. The Proton donor role is filled by lysine 60.

This sequence belongs to the OMP decarboxylase family. Type 1 subfamily. Homodimer.

It carries out the reaction orotidine 5'-phosphate + H(+) = UMP + CO2. It functions in the pathway pyrimidine metabolism; UMP biosynthesis via de novo pathway; UMP from orotate: step 2/2. Catalyzes the decarboxylation of orotidine 5'-monophosphate (OMP) to uridine 5'-monophosphate (UMP). The chain is Orotidine 5'-phosphate decarboxylase from Campylobacter lari (strain RM2100 / D67 / ATCC BAA-1060).